A 191-amino-acid polypeptide reads, in one-letter code: MITITDAAQSHFAKLLANQEEGTQIRVFVINPGTPTAECGVSYCPPDAVEATDTELKFEQLSAYVDELSVPYLQDAEIDFVTDQLGSQLTLKAPNAKMRKVDDSAPLMERVEYVLQSQINPQLAGHGGRVTLMEITPEGLAILQFGGGCNGCSMVDVTLKEGIEKELLQKFPELKGVRDLTEHQRGEHSYY.

Positions 149 and 152 each coordinate [4Fe-4S] cluster.

It belongs to the NfuA family. In terms of assembly, homodimer. [4Fe-4S] cluster serves as cofactor.

Functionally, involved in iron-sulfur cluster biogenesis. Binds a 4Fe-4S cluster, can transfer this cluster to apoproteins, and thereby intervenes in the maturation of Fe/S proteins. Could also act as a scaffold/chaperone for damaged Fe/S proteins. This is Fe/S biogenesis protein NfuA from Yersinia pseudotuberculosis serotype O:1b (strain IP 31758).